Reading from the N-terminus, the 450-residue chain is UDP-N-acetylmuramoylalanine--D-glutamate ligase (450 aa).

119–125 (GSNGKTT) provides a ligand contact to ATP.

The protein belongs to the MurCDEF family.

The protein localises to the cytoplasm. It catalyses the reaction UDP-N-acetyl-alpha-D-muramoyl-L-alanine + D-glutamate + ATP = UDP-N-acetyl-alpha-D-muramoyl-L-alanyl-D-glutamate + ADP + phosphate + H(+). It functions in the pathway cell wall biogenesis; peptidoglycan biosynthesis. Its function is as follows. Cell wall formation. Catalyzes the addition of glutamate to the nucleotide precursor UDP-N-acetylmuramoyl-L-alanine (UMA). The sequence is that of UDP-N-acetylmuramoylalanine--D-glutamate ligase from Streptococcus pneumoniae (strain Hungary19A-6).